We begin with the raw amino-acid sequence, 152 residues long: D-aminoacyl-tRNA deacylase (152 aa).

The Gly-cisPro motif, important for rejection of L-amino acids motif lies at 137–138; it reads GP.

The protein belongs to the DTD family. In terms of assembly, homodimer.

Its subcellular location is the cytoplasm. The enzyme catalyses glycyl-tRNA(Ala) + H2O = tRNA(Ala) + glycine + H(+). The catalysed reaction is a D-aminoacyl-tRNA + H2O = a tRNA + a D-alpha-amino acid + H(+). Functionally, an aminoacyl-tRNA editing enzyme that deacylates mischarged D-aminoacyl-tRNAs. Also deacylates mischarged glycyl-tRNA(Ala), protecting cells against glycine mischarging by AlaRS. Acts via tRNA-based rather than protein-based catalysis; rejects L-amino acids rather than detecting D-amino acids in the active site. By recycling D-aminoacyl-tRNA to D-amino acids and free tRNA molecules, this enzyme counteracts the toxicity associated with the formation of D-aminoacyl-tRNA entities in vivo and helps enforce protein L-homochirality. This chain is D-aminoacyl-tRNA deacylase, found in Aromatoleum aromaticum (strain DSM 19018 / LMG 30748 / EbN1) (Azoarcus sp. (strain EbN1)).